The chain runs to 587 residues: Aspartate--tRNA(Asp/Asn) ligase (587 aa).

E173 is an L-aspartate binding site. The tract at residues 197 to 200 (QLFK) is aspartate. An L-aspartate-binding site is contributed by R219. ATP is bound by residues 219–221 (RDE) and Q228. H448 contributes to the L-aspartate binding site. E481 is a binding site for ATP. R488 is an L-aspartate binding site. Position 533–536 (533–536 (GLDR)) interacts with ATP.

The protein belongs to the class-II aminoacyl-tRNA synthetase family. Type 1 subfamily. Homodimer.

The protein localises to the cytoplasm. It catalyses the reaction tRNA(Asx) + L-aspartate + ATP = L-aspartyl-tRNA(Asx) + AMP + diphosphate. In terms of biological role, aspartyl-tRNA synthetase with relaxed tRNA specificity since it is able to aspartylate not only its cognate tRNA(Asp) but also tRNA(Asn). Reaction proceeds in two steps: L-aspartate is first activated by ATP to form Asp-AMP and then transferred to the acceptor end of tRNA(Asp/Asn). This chain is Aspartate--tRNA(Asp/Asn) ligase, found in Alcanivorax borkumensis (strain ATCC 700651 / DSM 11573 / NCIMB 13689 / SK2).